We begin with the raw amino-acid sequence, 20 residues long: Large ribosomal subunit protein uL5 (20 aa).

It belongs to the universal ribosomal protein uL5 family. In terms of assembly, part of the 50S ribosomal subunit; part of the 5S rRNA/L5/L18/L25 subcomplex. Contacts the 5S rRNA and the P site tRNA. Forms a bridge to the 30S subunit in the 70S ribosome.

Its function is as follows. This is one of the proteins that bind and probably mediate the attachment of the 5S RNA into the large ribosomal subunit, where it forms part of the central protuberance. In the 70S ribosome it contacts protein S13 of the 30S subunit (bridge B1b), connecting the two subunits; this bridge is implicated in subunit movement. Contacts the P site tRNA; the 5S rRNA and some of its associated proteins might help stabilize positioning of ribosome-bound tRNAs. The chain is Large ribosomal subunit protein uL5 (rplE) from Bacillus cereus.